Reading from the N-terminus, the 157-residue chain is Protein Smg homolog (157 aa).

This sequence belongs to the Smg family.

This is Protein Smg homolog from Xylella fastidiosa (strain M23).